Reading from the N-terminus, the 308-residue chain is Probable manganese-dependent inorganic pyrophosphatase (308 aa).

Mn(2+) is bound by residues His-9, Asp-13, Asp-15, Asp-75, His-97, and Asp-149.

The protein belongs to the PPase class C family. Requires Mn(2+) as cofactor.

The protein localises to the cytoplasm. It carries out the reaction diphosphate + H2O = 2 phosphate + H(+). The protein is Probable manganese-dependent inorganic pyrophosphatase of Listeria monocytogenes serotype 4b (strain CLIP80459).